A 1603-amino-acid chain; its full sequence is MEAVIKVISSACKTYCGKISPSKKEIGAMLSLLQKEGLLMSPSDLYSPGSWDPITAALSQRAMVLGKSGELKTWGLVLGALKAAREEQVTSEQAKFWLGLGGGRVSPPGPECIEKPATERRIDKGEEVGETTAQRDAKMAPEKMATPKTVGTSCYQCGTATGCNCATASAPPPPYVGSGLYPSLAGVGEQQGQGGDTPWGAEQPRAEPGHAGLAPGPALTDWARIREELASTGPPVVAMPVVIKTEGPAWTPLEPKLITRLADTVRTKGLRSPITMAEVEALMSSPLLPHDVTNLMRVILGPAPYALWMDAWGVQLQTVIAAATRDPRHPANGQGRGERTNLDRLKGLADGMVGNPQGQAALLRPGELVAITASALQAFREVARLAEPAGPWADITQGPSESFVDFANRLIKAVEGSDLPPSARAPVIIDCFRQKSQPDIQQLIRAAPSTLTTPGEIIKYVLDRQKIAPLTDQGIAAAMSSAIQPLVMAVVNRERDGQTGSGGRARGLCYTCGSPGHYQAQCPKKRKSGNSRERCQLCDGMGHNAKQCRRRDGNQGQRPGKGLSSGSWPVSEQPAVSLAMTMEHKDRPLVRVILTNTGSHPVKQRSVYITALLDSGADITIISEEDWPTDWPVMEAANPQIHGIGGGIPMRKSRDMIEVGVINRDGSLERPLLLFPAVAMVRGSILGRDCLQGLGLRLTNLIGRATVLTVALHLAIPLKWKPDHTPVWIDQWPLPEGKLVALTQLVEKELQLGHIEPSLSCWNTPVFVIRKASGSYRLLHDLRAVNAKLVPFGAVQQGAPVLSALPRGWPLMVLDLKDCFFSIPLAEQDREAFAFTLPSVNNQAPARRFQWKVLPQGMTCSPTICQLVVGQVLEPLRLKHPSLRMLHYMDDLLLAASSHDGLEAAGEEVISTLERAGFTISPDKIQREPGVQYLGYKLGSTYVAPVGLVAEPRIATLWDVQKLVGSLQWLRPALGIPPRLMGPFYEQLRGSDPNEAREWNLDMKMAWREIVQLSTTAALERWDPALPLEGAVARCEQGAIGVLGQGLSTHPRPCLWLFSTQPTKAFTAWLEVLTLLITKLRASAVRTFGKEVDILLLPACFREDLPLPEGILLALRGFAGKIRSSDTPSIFDIARPLHVSLKVRVTDHPVPGPTAFTDASSSTHKGVVVWREGPRWEIKEIADLGASVQQLEARAVAMALLLWPTTPTNVVTDSAFVAKMLLKMGQEGVPSTAAAFILEDALSQRSAMAAVLHVRSHSEVPGFFTEGNDVADSQATFQAYPLREAKDLHTALHIGPRALSKACNISMQQAREVVQTCPHCNSAPALEAGVNPRGLGPLQIWQTDFTLEPRMAPRSWLAVTVDTASSAIVVTQHGRVTSVAAQHHWATAIAVLGRPKAIKTDNGSCFTSKSTREWLARWGIAHTTGIPGNSQGQAMVERANRLLKDKIRVLAEGDGFMKRIPTSKQGELLAKAMYALNHFERGENTKTPIQKHWRPTVLTEGPPVKIRIETGEWEKGWNVLVWGRGYAAVKNRDTDKVIWVPSRKVKPDVTQKDEVTKKDEASPLFAGISDWIPWEDEQEGLQGETASNKQERPGEDTLAANES.

Positions 124–141 are enriched in basic and acidic residues; sequence KGEEVGETTAQRDAKMAP. The disordered stretch occupies residues 124–144; it reads KGEEVGETTAQRDAKMAPEKM. Residues 172–175 carry the PPXY motif motif; that stretch reads PPPY. The LYPX(n)L motif signature appears at 180–184; the sequence is LYPSL. The Nuclear export signal signature appears at 219-229; the sequence is LTDWARIREEL. 2 consecutive CCHC-type zinc fingers follow at residues 507–524 and 533–550; these read GLCYTCGSPGHYQAQCPK and ERCQLCDGMGHNAKQCRR. The disordered stretch occupies residues 544–571; it reads NAKQCRRRDGNQGQRPGKGLSSGSWPVS. The region spanning 609 to 690 is the Peptidase A2 domain; that stretch reads ITALLDSGAD…VRGSILGRDC (82 aa). Asp614 (for protease activity; shared with dimeric partner) is an active-site residue. The region spanning 750-938 is the Reverse transcriptase domain; it reads LQLGHIEPSL…PGVQYLGYKL (189 aa). Mg(2+)-binding residues include Asp815, Asp890, Asp891, Asp1158, Glu1192, Asp1213, and Asp1272. Residues 1149-1280 enclose the RNase H type-1 domain; the sequence is PVPGPTAFTD…ADSQATFQAY (132 aa). The segment at 1280–1321 adopts an Integrase-type zinc-finger fold; that stretch reads YPLREAKDLHTALHIGPRALSKACNISMQQAREVVQTCPHCN. Zn(2+) is bound by residues His1289, His1293, Cys1317, and Cys1320. The Integrase catalytic domain maps to 1333-1496; the sequence is RGLGPLQIWQ…TPIQKHWRPT (164 aa). Mg(2+)-binding residues include Asp1344, Asp1401, and Glu1437. Positions 1502-1550 form a DNA-binding region, integrase-type; sequence PPVKIRIETGEWEKGWNVLVWGRGYAAVKNRDTDKVIWVPSRKVKPDVT. An involved in homooctamerization region spans residues 1548-1567; it reads DVTQKDEVTKKDEASPLFAG. A disordered region spans residues 1566–1603; it reads AGISDWIPWEDEQEGLQGETASNKQERPGEDTLAANES.

Active as a homodimer. As to quaternary structure, homodimer. Homomultimer. Homohexamer. In terms of assembly, homodimer; further associates as a homooctamer. Heterodimer of alpha and beta subunits. Three forms of RT exist: alpha-alpha (alpha-Pol), beta-beta (beta-Pol), and alpha-beta, with the major form being the heterodimer. Both the polymerase and RNase H active sites are located in the alpha subunit of heterodimeric RT alpha-beta. It depends on Mg(2+) as a cofactor. Requires Mn(2+) as cofactor. Specific enzymatic cleavages in vivo yield mature proteins. Post-translationally, capsid protein p27: The cleavage at the C-terminus is slowly trimmed by the viral protease, sometimes being cut internally thereby generating the short version of the capsid protein and a capsid protein C-terminally extended by 3 amino acids in a ratio of 2:1.

The protein resides in the virion. It catalyses the reaction DNA(n) + a 2'-deoxyribonucleoside 5'-triphosphate = DNA(n+1) + diphosphate. It carries out the reaction Endonucleolytic cleavage to 5'-phosphomonoester.. In terms of biological role, capsid protein p27: Self-associates to form the irregular polyhedron core composed of hexamers and pentamers, that encapsulates the genomic RNA-nucleocapsid complex. Assembles as a tube in vitro. Binds to inositol hexakisphosphate (IP6), which allows the assembly of the polyhedral capsid. Functionally, spacer peptide: Plays a role in the oligomerization of the Gag polyprotein and in the stabilization of the immature particle. Essential layering element during tube assembly. Its function is as follows. Binds strongly to viral nucleic acids and promotes their packaging. Plays a role in the maturation-stabilization of the viral dimeric RNA via highly structured zinc-binding motifs. The aspartyl protease that mediates proteolytic cleavages of Gag and Gag-Pol polyproteins during or shortly after the release of the virion from the plasma membrane. Cleavages take place as an ordered, step-wise cascade to yield mature proteins. This process is called maturation. Displays maximal activity during the budding process just prior to particle release from the cell. In terms of biological role, catalyzes viral DNA integration into the host chromosome, by performing a series of DNA cutting and joining reactions. This recombination event is an essential step in the viral replication cycle. Has a strong preference for using the 3'-OH at the viral DNA end as a nucleophile. This is Gag-Pol polyprotein (gag-pol) from Avian leukosis virus subgroup A (isolate RSA) (ALV-A RSA).